Consider the following 476-residue polypeptide: Exoglucanase-6A (476 aa).

An N-terminal signal peptide occupies residues 1-16; the sequence is MAKFFLTAAFAAAALA. 2 disulfides stabilise this stretch: C33–C50 and C44–C60. Positions 33–60 constitute a CBM1 domain; that stretch reads CGGIGFNGPTCCQSGSTCVKQNDWYSQC. The segment at 67–94 is disordered; that stretch reads TTTSTTSTSSSSTTSRATSTTRTGGVTS. O-linked (Man...) threonine glycosylation occurs at T144. O-linked (Man...) serine glycosylation is present at S153. Residues W163 and D165 each coordinate substrate. An N-linked (GlcNAc...) asparagine glycan is attached at N167. Residues 200–222 form a substrate binding loop 1 region; the sequence is YDLPDRDCAAAASNGEWAIANNG. The active-site Proton donor is the D252. Residues H297, W300, N336, W397, K425, and E429 each coordinate substrate. The segment at 423–461 is substrate binding loop 2; sequence WVKPGGECDGTSDTTAARYDYHCGLEDALKPAPEAGQWF. Residue D431 is the Proton acceptor of the active site.

The protein belongs to the glycosyl hydrolase 6 (cellulase A) family. In terms of assembly, monomer.

The catalysed reaction is Hydrolysis of (1-&gt;4)-beta-D-glucosidic linkages in cellulose and cellotetraose, releasing cellobiose from the non-reducing ends of the chains.. Functionally, plays a central role in the recycling of plant biomass. The biological conversion of cellulose to glucose generally requires three types of hydrolytic enzymes: (1) Endoglucanases which cut internal beta-1,4-glucosidic bonds; (2) Exocellobiohydrolases that cut the disaccharide cellobiose from the non-reducing end of the cellulose polymer chain; (3) Beta-1,4-glucosidases which hydrolyze the cellobiose and other short cello-oligosaccharides to glucose. This is Exoglucanase-6A from Humicola insolens (Soft-rot fungus).